The primary structure comprises 919 residues: MATTPDAAFEALMNGVTSWDLPKEFTPSELLLIGEAAFPVMVNDKGQVLIAVSFYGQGRLVVVSHESYLMHAGLAPFLLNAVSWLCPSPGTPIEVHSSLASLVNILRGSGINALVQPEPGEALGVYCIDAYNDTLTKKLVQFVKRGGGLLIGGQAWNWASQHGSDKVLFSFPGNKVTSVAGVYFTDVYGDINRFKVSKKIPKIPLYIRCWEELRHDQDQLLDGISMLDVRTGGVPSQLLVHGSLAFPLGLDNSFLSCFLAAAHYGRGRVVLAAHEAMLCAPKMEPFLLNAIRWLSRGQEDNIGVNTRLKNLNSLLLKHGLKCSLESHLTDDMCVYCCAAYSDQEAKKIQEFVAEGGGLLIGGQSWWWASQNPGSSALGSFPGNVILNTFGLSILPRTVSPGCFPILHIDIRNYHFRGALSEFQAMLNHKEGNLEKRYSGKLGVDGAGFLQIPAQGVPAYLSVHRILRKILRQAGLPAVSKSNPVSSHSYEAAILQLATELAHSGSDCSQIAHNLSSQTCSSNLSSSEHPITVEINGTNPGDRDVWMSTGLYLLEGQSTEISVSEPAASAGLKVQIGCHTDDLTFAIKLFRAPVVTYQCCMNRTQRSVSCLWGGLLYIIVPKGCQLGPVSVTITNAVPAPYYKLGKTSLEEWKSCIQKNLGPWGELATDNVILTVPTASLKTLENPEPLLQLWDEMMQAVARLASQPFPFQRPERIVADVQLSAGWMHSGYPIMCHMESVQELVSLANIRSKGLWGPIHELGHNQQCRGWEFPPHTTEATCNLWSVYVHETVLGIPRAQAHPQLKPEEREKRIKEHLQKGAPLQNWNVWTALETYLQLQEVFGWEPFITLFAEYQTIFYIPEDNECKMNIWLKLFSEKVQKNLVPFFEAWGWPIQKDVAEDLACYPSWEDHPLRMYMGSE.

The 300-residue stretch at 543-842 (DVWMSTGLYL…TYLQLQEVFG (300 aa)) folds into the Peptidase M60 domain.

The protein belongs to the TCAF family. Interacts with TRPM8 (via N-terminus and C-terminus domains); the interaction inhibits TRPM8 channel activity. Interacts with TRPV6.

The protein localises to the cell membrane. Functionally, negatively regulates the plasma membrane cation channel TRPM8 activity. Involved in the recruitment of TRPM8 to the cell surface. Promotes prostate cancer cell migration stimulation in a TRPM8-dependent manner. This Mus musculus (Mouse) protein is TRPM8 channel-associated factor 2.